Here is a 72-residue protein sequence, read N- to C-terminus: uncharacterized protein (72 aa).

The interval 52 to 72 (KGGRQRDEAVGVEELCKQHKE) is disordered. A compositionally biased stretch (basic and acidic residues) spans 55–72 (RQRDEAVGVEELCKQHKE).

The protein belongs to the YiiE family.

This is an uncharacterized protein from Escherichia coli O6:H1 (strain CFT073 / ATCC 700928 / UPEC).